The chain runs to 129 residues: Transcription factor bHLH138 (129 aa).

The segment covering 1–18 has biased composition (basic and acidic residues); sequence MERYTKKNERFKAEEGKG. Residues 1–24 form a disordered region; the sequence is MERYTKKNERFKAEEGKGSKKSRT. In terms of domain architecture, bHLH spans 19 to 68; that stretch reads SKKSRTFLTERERRALFNDRFFDLKNLIPNPTKGGEASIVQDGIVYINEL.

Belongs to the bHLH protein family.

The protein resides in the nucleus. This Arabidopsis thaliana (Mouse-ear cress) protein is Transcription factor bHLH138.